We begin with the raw amino-acid sequence, 247 residues long: Enolase-phosphatase E1 (247 aa).

It belongs to the HAD-like hydrolase superfamily. MasA/MtnC family. As to quaternary structure, monomer. Requires Mg(2+) as cofactor.

It carries out the reaction 5-methylsulfanyl-2,3-dioxopentyl phosphate + H2O = 1,2-dihydroxy-5-(methylsulfanyl)pent-1-en-3-one + phosphate. Its pathway is amino-acid biosynthesis; L-methionine biosynthesis via salvage pathway; L-methionine from S-methyl-5-thio-alpha-D-ribose 1-phosphate: step 3/6. The protein operates within amino-acid biosynthesis; L-methionine biosynthesis via salvage pathway; L-methionine from S-methyl-5-thio-alpha-D-ribose 1-phosphate: step 4/6. In terms of biological role, bifunctional enzyme that catalyzes the enolization of 2,3-diketo-5-methylthiopentyl-1-phosphate (DK-MTP-1-P) into the intermediate 2-hydroxy-3-keto-5-methylthiopentenyl-1-phosphate (HK-MTPenyl-1-P), which is then dephosphorylated to form the acireductone 1,2-dihydroxy-3-keto-5-methylthiopentene (DHK-MTPene). This is Enolase-phosphatase E1 from Leptospira biflexa serovar Patoc (strain Patoc 1 / Ames).